A 434-amino-acid polypeptide reads, in one-letter code: Purple acid phosphatase 22 (434 aa).

The first 22 residues, 1–22, serve as a signal peptide directing secretion; sequence MKLFGLFLSFTLLFLCPFISQA. Asn116 carries an N-linked (GlcNAc...) asparagine glycan. The Fe cation site is built by Asp148, Asp175, and Tyr178. Asp175 is a binding site for Zn(2+). Zn(2+) contacts are provided by Asn208 and His292. Residue Asn208 coordinates substrate. His302 functions as the Proton donor in the catalytic mechanism. His329 provides a ligand contact to Zn(2+). Substrate is bound at residue 329–331; the sequence is HVH. His331 is a binding site for Fe cation. Asn403 carries an N-linked (GlcNAc...) asparagine glycan.

This sequence belongs to the metallophosphoesterase superfamily. Purple acid phosphatase family. In terms of assembly, homodimer. The cofactor is Fe cation. It depends on Zn(2+) as a cofactor. In terms of tissue distribution, expressed in roots, stems, leaves, flowers and siliques.

It localises to the secreted. It catalyses the reaction a phosphate monoester + H2O = an alcohol + phosphate. In Arabidopsis thaliana (Mouse-ear cress), this protein is Purple acid phosphatase 22 (PAP22).